The following is an 823-amino-acid chain: MKRHRPVSSSDSSDESPSTSFTSGSMYRIKSKIPNEHKKPAEVFRKDLISAMKLPDSHHINPDSYYLFADTWKEEWEKGVQVPASPDTVPQPSLRIIAEKVKDVLFIRPRKYIHCSSPDTTEPGYINIMELAASVCRYDLDDMDIFWLQELNEDLAEMGCGPVDENLMEKTVEVLERHCHENMNHAIETEEGLGIEYDEDVICDVCRSPDSEEGNDMVFCDKCNVCVHQACYGILKVPEGSWLCRSCVLGIYPQCVLCPKKGGALKTTKTGTKWAHVSCALWIPEVSIACPERMEPITKISHIPPSRWALVCNLCKLKTGACIQCSIKSCITAFHVTCAFEHGLEMKTILDEGDEVKFKSYCLKHSQNRQKLGEAEYPHHRAKEQSQAKSEKTSLRAQKLRELEEEFYSLVRVEDVAAELGMPTLAVDFIYNYWKLKRKSNFNKPLFPPKEDEENGLVQPKEESIHTRMRMFMHLRQDLERVRNLCYMISRREKLKLSHNKIQEQIFGLQVQLLNQEIDAGLPLTNALENSLFYPPPRITLKLKMPKSTPEDHRNSSTETDQQPHSPDSSSSVHSIRNMQVPQESLEMRTKSYPRYPLESKNNRLLASLSHSRSEAKESSPAWRTPSSECYHGQSLGKPLVLQAALHGQSSIGNGKSQPNSKFAKSNGLEGSWSGNVTQKDSSSEMFCDQEPVFSPHLVSQGSFRKSTVEHFSRSFKETTNRWVKNTEDLQCYVKPTKNMSPKEQFWGRQVLRRSAGRAPYQENDGYCPDLELSDSEAESDGNKEKVRVRKDSSDRENPPHDSRRDCHGKSKTHPLSHSSMQR.

Residues 1–32 are disordered; sequence MKRHRPVSSSDSSDESPSTSFTSGSMYRIKSK. The span at 8–25 shows a compositional bias: low complexity; it reads SSSDSSDESPSTSFTSGS. Residues lysine 30 and lysine 32 each carry the N6-acetyllysine modification. The residue at position 85 (serine 85) is a Phosphoserine. The PHD-type 1 zinc finger occupies 200–250; that stretch reads DVICDVCRSPDSEEGNDMVFCDKCNVCVHQACYGILKVPEGSWLCRSCVLG. The C2HC pre-PHD-type zinc finger occupies 252–286; that stretch reads YPQCVLCPKKGGALKTTKTGTKWAHVSCALWIPEV. A PHD-type 2 zinc finger spans residues 310 to 366; that stretch reads LVCNLCKLKTGACIQCSIKSCITAFHVTCAFEHGLEMKTILDEGDEVKFKSYCLKHS. Disordered stretches follow at residues 372–395 and 542–576; these read LGEA…KTSL and KLKM…VHSI. Residues 561-575 are compositionally biased toward low complexity; sequence DQQPHSPDSSSSVHS. Position 566 is a phosphoserine (serine 566). Lysine 601 carries the N6-acetyllysine modification. The residue at position 608 (serine 608) is a Phosphoserine. A disordered region spans residues 609–630; the sequence is LSHSRSEAKESSPAWRTPSSEC. Lysine 638 carries the N6-acetyllysine modification. 2 stretches are compositionally biased toward polar residues: residues 650–664 and 673–684; these read SSIG…SKFA and WSGNVTQKDSSS. Residues 650 to 684 form a disordered region; it reads SSIGNGKSQPNSKFAKSNGLEGSWSGNVTQKDSSS. The residue at position 735 (lysine 735) is an N6-acetyllysine. Residues 758 to 823 form a disordered region; sequence RAPYQENDGY…HPLSHSSMQR (66 aa). Phosphoserine is present on residues serine 774, serine 776, and serine 780. Positions 781–809 are enriched in basic and acidic residues; it reads DGNKEKVRVRKDSSDRENPPHDSRRDCHG.

This sequence belongs to the JADE family. Component of the HBO1 complex composed at least of ING4 or ING5, KAT7/HBO1, MEAF6, and one of JADE1, JADE2 and JADE3. In terms of tissue distribution, ubiquitously expressed, with highest levels in placenta and uterus.

Scaffold subunit of some HBO1 complexes, which have a histone H4 acetyltransferase activity. This is Protein Jade-3 (JADE3) from Homo sapiens (Human).